The sequence spans 84 residues: Toxin BmKaTx13 (84 aa).

A signal peptide spans 1–19 (MNYLVMISFALLLMKGVES). Residues 21–83 (RDAYIAKPEN…VPIRVPGKCH (63 aa)) enclose the LCN-type CS-alpha/beta domain. Intrachain disulfides connect Cys31–Cys82, Cys35–Cys55, Cys41–Cys65, and Cys45–Cys67. Arg84 is a propeptide (removed by a carboxypeptidase).

The protein belongs to the long (4 C-C) scorpion toxin superfamily. Sodium channel inhibitor family. Alpha subfamily. Expressed by the venom gland.

It is found in the secreted. Alpha toxins bind voltage-independently at site-3 of sodium channels (Nav) and inhibit the inactivation of the activated channels, thereby blocking neuronal transmission. This toxin is active against mammals. In Olivierus martensii (Manchurian scorpion), this protein is Toxin BmKaTx13.